Consider the following 582-residue polypeptide: DNA polymerase IV (582 aa).

Residues 127–161 (NADDGQSSTDKESEISTDVESERNDDSNNKDMIQA) form a disordered region. Positions 135-155 (TDKESEISTDVESERNDDSNN) are enriched in basic and acidic residues. Positions 360 to 369 (RGYSKCGDID) are involved in ssDNA binding. 3 residues coordinate Mg(2+): Asp-367, Asp-369, and Asp-502.

This sequence belongs to the DNA polymerase type-X family. Interacts with DNL4 subunit of the DNL4-LIF1 complex. Requires Mg(2+) as cofactor.

The protein localises to the nucleus. It carries out the reaction DNA(n) + a 2'-deoxyribonucleoside 5'-triphosphate = DNA(n+1) + diphosphate. Stimulated by the interaction with the DNL4-LIF1 complex. In terms of biological role, repair polymerase. Involved in gap-filling in DNA nonhomologous end joining (NHEJ) required for double-strand break repair. Seems to conduct DNA synthesis in a stepwise distributive fashion rather than in a processive fashion as for other DNA polymerases. Preferentially acts upon short gaps formed by the alignment of linear duplexes with complementary single-strand ends. Required for filling gaps that need removal of a 5'- or 3'-terminal mismatch, however lacks nuclease activities. The protein is DNA polymerase IV (POL4) of Saccharomyces cerevisiae (strain ATCC 204508 / S288c) (Baker's yeast).